Here is a 1094-residue protein sequence, read N- to C-terminus: Protein transport protein Sec24C (1094 aa).

Residues methionine 1–asparagine 338 form a disordered region. A compositionally biased stretch (pro residues) spans proline 8–isoleucine 19. 2 stretches are compositionally biased toward low complexity: residues tyrosine 20–glycine 29 and serine 60–proline 77. A compositionally biased stretch (polar residues) spans aspartate 90–methionine 101. Positions valine 123 to threonine 132 are enriched in pro residues. Polar residues-rich tracts occupy residues serine 133–glutamine 144, serine 165–asparagine 175, proline 189–proline 215, and serine 240–proline 251. Threonine 214 is subject to Phosphothreonine. Low complexity predominate over residues proline 273–glutamine 282. Zn(2+)-binding residues include cysteine 425, cysteine 428, cysteine 447, and cysteine 450. The segment at cysteine 425–cysteine 450 is zinc finger-like. The stretch at threonine 962 to glycine 1034 is one Gelsolin-like repeat.

Belongs to the SEC23/SEC24 family. SEC24 subfamily. In terms of assembly, COPII is composed of at least five proteins: the Sec23/24 complex, the Sec13/31 complex and Sar1. Interacts with TMED2 and TMED10. Interacts with GOSR2 (via IxM motif) and STX5 (via IxM motif); recruits GOSR2 and STX5 into COPII-coated vesicles. Interacts with DDHD1. Interacts with STING1; promoting STING1 translocation to the COPII vesicles. In terms of tissue distribution, ubiquitous.

It localises to the cytoplasmic vesicle. Its subcellular location is the COPII-coated vesicle membrane. It is found in the endoplasmic reticulum membrane. The protein localises to the cytoplasm. The protein resides in the cytosol. Its function is as follows. Component of the coat protein complex II (COPII) which promotes the formation of transport vesicles from the endoplasmic reticulum (ER). The coat has two main functions, the physical deformation of the endoplasmic reticulum membrane into vesicles and the selection of cargo molecules for their transport to the Golgi complex. Plays a central role in cargo selection within the COPII complex and together with SEC24D may have a different specificity compared to SEC24A and SEC24B. May more specifically package GPI-anchored proteins through the cargo receptor TMED10. May also be specific for IxM motif-containing cargos like the SNAREs GOSR2 and STX5. In Homo sapiens (Human), this protein is Protein transport protein Sec24C.